A 223-amino-acid chain; its full sequence is Kinetochore protein Spc25 (223 aa).

Residues 51-119 (RHQRKVGKLQ…NEIMERIQTL (69 aa)) adopt a coiled-coil conformation.

It belongs to the SPC25 family. As to quaternary structure, component of the Ndc80 complex, which is composed of Ndc80, Nuf2 and Spc25.

It is found in the nucleus. Its subcellular location is the chromosome. It localises to the centromere. The protein resides in the kinetochore. Acts as a component of the essential kinetochore-associated Ndc80 complex, which is required for chromosome segregation and spindle checkpoint activity during meiosis and mitosis. Required for kinetochore integrity and the organization of stable microtubule binding sites in the outer plate of the kinetochore. Participates in SAC signaling that responds specifically to disruptions in spindle microtubule dynamics. The NDC80 complex synergistically enhances the affinity of the SKA1 complex for microtubules and may allow the NDC80 complex to track depolymerizing microtubules. This chain is Kinetochore protein Spc25, found in Drosophila teissieri (Fruit fly).